The primary structure comprises 344 residues: tRNA N6-adenosine threonylcarbamoyltransferase (344 aa).

Fe cation is bound by residues histidine 118 and histidine 122. Substrate contacts are provided by residues threonine 141–glycine 145, aspartate 174, glycine 187, and asparagine 284. Aspartate 312 is a Fe cation binding site.

The protein belongs to the KAE1 / TsaD family. Fe(2+) is required as a cofactor.

The protein resides in the cytoplasm. The enzyme catalyses L-threonylcarbamoyladenylate + adenosine(37) in tRNA = N(6)-L-threonylcarbamoyladenosine(37) in tRNA + AMP + H(+). Required for the formation of a threonylcarbamoyl group on adenosine at position 37 (t(6)A37) in tRNAs that read codons beginning with adenine. Is involved in the transfer of the threonylcarbamoyl moiety of threonylcarbamoyl-AMP (TC-AMP) to the N6 group of A37, together with TsaE and TsaB. TsaD likely plays a direct catalytic role in this reaction. The chain is tRNA N6-adenosine threonylcarbamoyltransferase from Desulfotalea psychrophila (strain LSv54 / DSM 12343).